A 90-amino-acid polypeptide reads, in one-letter code: Putative Fis-like DNA-binding protein (90 aa).

The segment at residues Gln-66 to Lys-85 is a DNA-binding region (H-T-H motif).

The protein belongs to the transcriptional regulatory Fis family.

This is Putative Fis-like DNA-binding protein from Xylella fastidiosa (strain 9a5c).